A 244-amino-acid polypeptide reads, in one-letter code: NAD-dependent protein deacetylase (244 aa).

The Deacetylase sirtuin-type domain maps to 1-244; sequence MDDKINKLKE…IGKVLGKVID (244 aa). Residues Ala24, Thr28, Phe35, Arg36, Gln105, Ile107, Asp108, and His123 each contribute to the NAD(+) site. Residue Phe35 coordinates nicotinamide. Nicotinamide is bound by residues Ile107 and Asp108. His123 (proton acceptor) is an active-site residue. Residues Cys131, Cys134, Cys152, and Cys155 each contribute to the Zn(2+) site. NAD(+)-binding residues include Thr193, Ser194, Asn217, and Ile235.

It belongs to the sirtuin family. Class U subfamily. The cofactor is Zn(2+).

It is found in the cytoplasm. It carries out the reaction N(6)-acetyl-L-lysyl-[protein] + NAD(+) + H2O = 2''-O-acetyl-ADP-D-ribose + nicotinamide + L-lysyl-[protein]. In terms of biological role, NAD-dependent protein deacetylase which modulates the activities of several enzymes which are inactive in their acetylated form. This chain is NAD-dependent protein deacetylase, found in Clostridium perfringens (strain 13 / Type A).